A 338-amino-acid polypeptide reads, in one-letter code: Holliday junction branch migration complex subunit RuvB (338 aa).

The segment at 1–181 (MTTRTISPEK…FGVISRLEFY (181 aa)) is large ATPase domain (RuvB-L). ATP contacts are provided by residues Leu20, Arg21, Gly62, Lys65, Thr66, Thr67, 128 to 130 (EDF), Arg171, Tyr181, and Arg218. Thr66 is a Mg(2+) binding site. Residues 182-252 (TDAELSTIVT…VVDESLKLLE (71 aa)) are small ATPAse domain (RuvB-S). Residues 255-338 (EKGFDQMDRT…APAPGQGALF (84 aa)) are head domain (RuvB-H). Residues Arg291, Arg310, and Arg315 each contribute to the DNA site.

Belongs to the RuvB family. In terms of assembly, homohexamer. Forms an RuvA(8)-RuvB(12)-Holliday junction (HJ) complex. HJ DNA is sandwiched between 2 RuvA tetramers; dsDNA enters through RuvA and exits via RuvB. An RuvB hexamer assembles on each DNA strand where it exits the tetramer. Each RuvB hexamer is contacted by two RuvA subunits (via domain III) on 2 adjacent RuvB subunits; this complex drives branch migration. In the full resolvosome a probable DNA-RuvA(4)-RuvB(12)-RuvC(2) complex forms which resolves the HJ.

The protein localises to the cytoplasm. The catalysed reaction is ATP + H2O = ADP + phosphate + H(+). The RuvA-RuvB-RuvC complex processes Holliday junction (HJ) DNA during genetic recombination and DNA repair, while the RuvA-RuvB complex plays an important role in the rescue of blocked DNA replication forks via replication fork reversal (RFR). RuvA specifically binds to HJ cruciform DNA, conferring on it an open structure. The RuvB hexamer acts as an ATP-dependent pump, pulling dsDNA into and through the RuvAB complex. RuvB forms 2 homohexamers on either side of HJ DNA bound by 1 or 2 RuvA tetramers; 4 subunits per hexamer contact DNA at a time. Coordinated motions by a converter formed by DNA-disengaged RuvB subunits stimulates ATP hydrolysis and nucleotide exchange. Immobilization of the converter enables RuvB to convert the ATP-contained energy into a lever motion, pulling 2 nucleotides of DNA out of the RuvA tetramer per ATP hydrolyzed, thus driving DNA branch migration. The RuvB motors rotate together with the DNA substrate, which together with the progressing nucleotide cycle form the mechanistic basis for DNA recombination by continuous HJ branch migration. Branch migration allows RuvC to scan DNA until it finds its consensus sequence, where it cleaves and resolves cruciform DNA. This Geobacter sulfurreducens (strain ATCC 51573 / DSM 12127 / PCA) protein is Holliday junction branch migration complex subunit RuvB.